Here is a 1509-residue protein sequence, read N- to C-terminus: ABC transporter G family member 38 (1509 aa).

Residues 196–467 enclose the ABC transporter 1 domain; that stretch reads LGLVGLNFAK…FERCGFRCPE (272 aa). 229 to 236 contacts ATP; that stretch reads GPPSSGKT. Residues 545-758 form the ABC transmembrane type-2 1 domain; it reads ELLKTSCSKE…AYIAFSSNEM (214 aa). The next 7 helical transmembrane spans lie at 563–583, 598–618, 651–671, 682–702, 707–727, 733–753, and 791–811; these read FVYI…STVF, IYIG…FADL, IPSS…TMGF, LLVV…TAGL, VVTN…GGFI, IPKW…YIAF, and YWIA…LFSL. Residues 908 to 1160 enclose the ABC transporter 2 domain; sequence MSFNEINYYV…KVVEYFEAIP (253 aa). 953–960 serves as a coordination point for ATP; sequence GVSGAGKT. Positions 1233–1447 constitute an ABC transmembrane type-2 2 domain; the sequence is NQFKLCLWKQ…TVYGLIVSQY (215 aa). The next 7 membrane-spanning stretches (helical) occupy residues 1252 to 1272, 1284 to 1304, 1336 to 1356, 1367 to 1387, 1397 to 1417, 1425 to 1445, and 1478 to 1498; these read YNLV…TIFW, LLVI…ENSV, VVVE…IVYP, FFWF…YGMM, VASI…GFFI, WWVW…LIVS, and FMGV…FTYA.

The protein belongs to the ABC transporter superfamily. ABCG family. PDR (TC 3.A.1.205) subfamily.

Its subcellular location is the membrane. May be a general defense protein. The sequence is that of ABC transporter G family member 38 from Oryza sativa subsp. japonica (Rice).